The following is a 362-amino-acid chain: Biotin synthase (362 aa).

Positions 46–273 constitute a Radical SAM core domain; the sequence is NEVQVSTLLS…ASHVRLSAGR (228 aa). Positions 61, 65, and 68 each coordinate [4Fe-4S] cluster. The [2Fe-2S] cluster site is built by Cys105, Cys136, Cys196, and Arg268. A disordered region spans residues 320 to 339; it reads PAQRAQKPDQVQEEELLAEV.

This sequence belongs to the radical SAM superfamily. Biotin synthase family. In terms of assembly, homodimer. [4Fe-4S] cluster is required as a cofactor. The cofactor is [2Fe-2S] cluster.

The enzyme catalyses (4R,5S)-dethiobiotin + (sulfur carrier)-SH + 2 reduced [2Fe-2S]-[ferredoxin] + 2 S-adenosyl-L-methionine = (sulfur carrier)-H + biotin + 2 5'-deoxyadenosine + 2 L-methionine + 2 oxidized [2Fe-2S]-[ferredoxin]. It functions in the pathway cofactor biosynthesis; biotin biosynthesis; biotin from 7,8-diaminononanoate: step 2/2. In terms of biological role, catalyzes the conversion of dethiobiotin (DTB) to biotin by the insertion of a sulfur atom into dethiobiotin via a radical-based mechanism. The chain is Biotin synthase from Aeromonas hydrophila subsp. hydrophila (strain ATCC 7966 / DSM 30187 / BCRC 13018 / CCUG 14551 / JCM 1027 / KCTC 2358 / NCIMB 9240 / NCTC 8049).